A 294-amino-acid chain; its full sequence is Cell division control protein 2 homolog 2 (294 aa).

Residues Y4–F287 form the Protein kinase domain. ATP-binding positions include I10–V18 and K33. T14 is modified (phosphothreonine). Y15 bears the Phosphotyrosine mark. D127 acts as the Proton acceptor in catalysis. The residue at position 161 (T161) is a Phosphothreonine; by CAK.

This sequence belongs to the protein kinase superfamily. CMGC Ser/Thr protein kinase family. CDC2/CDKX subfamily. In terms of tissue distribution, found in most organs including root, young leaf, stem, vegetative meristem and flower bud.

The catalysed reaction is L-seryl-[protein] + ATP = O-phospho-L-seryl-[protein] + ADP + H(+). The enzyme catalyses L-threonyl-[protein] + ATP = O-phospho-L-threonyl-[protein] + ADP + H(+). Phosphorylation at Thr-14 or Tyr-15 inactivates the enzyme, while phosphorylation at Thr-161 activates it. Functionally, plays a key role in the control of the eukaryotic cell cycle. Component of the kinase complex that phosphorylates the repetitive C-terminus of RNA polymerase II. This is Cell division control protein 2 homolog 2 (CDC2B) from Medicago sativa (Alfalfa).